A 291-amino-acid polypeptide reads, in one-letter code: UPF0276 protein VV1_0952 (291 aa).

This sequence belongs to the UPF0276 family.

The polypeptide is UPF0276 protein VV1_0952 (Vibrio vulnificus (strain CMCP6)).